Here is a 136-residue protein sequence, read N- to C-terminus: MARTKQTARKSTGGKAPRKQLATKAARKSAPSTGGVKKPHRYRPGTVALREIRRYQKSTELLIRKLPFQRLVREIAQDFKTDLRFQSAAIGALQEASEAYLVGLFEDTNLCAIHAKRVTIMPKDIQLARRIRGERA.

A disordered region spans residues 1–43 (MARTKQTARKSTGGKAPRKQLATKAARKSAPSTGGVKKPHRYR). At R3 the chain carries Asymmetric dimethylarginine; by PRMT6. T4 bears the Phosphothreonine; by HASPIN and VRK1 mark. An Allysine; alternate modification is found at K5. K5 carries the post-translational modification N6,N6,N6-trimethyllysine; alternate. An N6,N6-dimethyllysine; alternate modification is found at K5. K5 is subject to N6-(2-hydroxyisobutyryl)lysine; alternate. N6-acetyllysine; alternate is present on K5. At K5 the chain carries N6-methyllysine; alternate. Residue Q6 is modified to 5-glutamyl dopamine; alternate. Q6 carries the post-translational modification 5-glutamyl serotonin; alternate. T7 bears the Phosphothreonine; by PKC mark. K10 is subject to N6-(2-hydroxyisobutyryl)lysine; alternate. K10 carries the post-translational modification N6-lactoyllysine; alternate. K10 is subject to N6-methylated lysine. S11 carries the ADP-ribosylserine; alternate modification. S11 carries the phosphoserine; alternate; by AURKB, AURKC, RPS6KA3, RPS6KA4 and RPS6KA5 modification. The residue at position 12 (T12) is a Phosphothreonine; by PKC. Position 15 is an N6-(2-hydroxyisobutyryl)lysine; alternate (K15). Residue K15 is modified to N6-lactoyllysine; alternate. K15 is modified (N6-acetyllysine). Residue K15 is modified to N6-glutaryllysine; alternate. R18 bears the Asymmetric dimethylarginine mark. 3 positions are modified to N6-(2-hydroxyisobutyryl)lysine; alternate: K19, K24, and K28. An N6-acetyllysine; alternate modification is found at K19. 3 positions are modified to N6-lactoyllysine; alternate: K19, K24, and K28. 3 positions are modified to N6-glutaryllysine; alternate: K19, K24, and K28. N6-butyryllysine; alternate occurs at positions 19 and 24. K19 is modified (N6-methylated lysine; alternate). The residue at position 24 (K24) is an N6-acetyllysine. K28 carries the post-translational modification N6-acetyllysine; alternate. Residue K28 is modified to N6-methylated lysine; alternate. S29 carries the post-translational modification ADP-ribosylserine; alternate. Residue S29 is modified to Phosphoserine; alternate; by AURKB, AURKC and RPS6KA5. K37 bears the N6-(2-hydroxyisobutyryl)lysine; alternate mark. K37 is modified (N6-acetyllysine; alternate). K37 bears the N6-methylated lysine; alternate mark. Y42 is subject to Phosphotyrosine. At K57 the chain carries N6-(2-hydroxyisobutyryl)lysine; alternate. K57 carries the post-translational modification N6-lactoyllysine; alternate. An N6-glutaryllysine; alternate modification is found at K57. K57 is modified (N6-succinyllysine; alternate). S58 is modified (phosphoserine). N6-(2-hydroxyisobutyryl)lysine; alternate is present on residues K65 and K80. K65 and K80 each carry N6-methylated lysine. At K80 the chain carries N6-lactoyllysine; alternate. K80 carries the post-translational modification N6-glutaryllysine; alternate. Residue K80 is modified to N6-succinyllysine; alternate. Position 81 is a phosphothreonine (T81). K116 and K123 each carry N6-acetyllysine; alternate. N6-glutaryllysine; alternate is present on residues K116 and K123. K123 is subject to N6-(2-hydroxyisobutyryl)lysine; alternate. K123 is subject to N6-methyllysine; alternate. Residue K123 is modified to N6-succinyllysine; alternate.

This sequence belongs to the histone H3 family. The nucleosome is a histone octamer containing two molecules each of H2A, H2B, H3 and H4 assembled in one H3-H4 heterotetramer and two H2A-H2B heterodimers. The octamer wraps approximately 147 bp of DNA. Interacts with zmynd11; when trimethylated at 'Lys-36' (H3.3K36me3). Post-translationally, acetylation is generally linked to gene activation. Acetylation on Lys-19 (H3K18ac) and Lys-24 (H3K24ac) favors methylation at Arg-18 (H3R17me). Acetylation at Lys-123 (H3K122ac) by EP300/p300 plays a central role in chromatin structure: localizes at the surface of the histone octamer and stimulates transcription, possibly by promoting nucleosome instability. In terms of processing, asymmetric dimethylation at Arg-18 (H3R17me2a) is linked to gene activation. Asymmetric dimethylation at Arg-3 (H3R2me2a) by prmt6 is linked to gene repression and is mutually exclusive with H3 Lys-5 methylation (H3K4me2 and H3K4me3). H3R2me2a is present at the 3' of genes regardless of their transcription state and is enriched on inactive promoters, while it is absent on active promoters. Specifically enriched in modifications associated with active chromatin such as methylation at Lys-5 (H3K4me), Lys-37 (H3K36me) and Lys-80 (H3K79me) are linked to gene activation. Methylation at Lys-5 (H3K4me) facilitates subsequent acetylation of H3 and H4. Methylation at Lys-80 (H3K79me) is associated with DNA double-strand break (DSB) responses and is a specific target for tp53bp1. Methylation at Lys-10 (H3K9me) and Lys-28 (H3K27me) are linked to gene repression. Methylation at Lys-10 (H3K9me) is a specific target for HP1 proteins (cbx1, cbx3 and cbx5) and prevents subsequent phosphorylation at Ser-11 (H3S10ph) and acetylation of H3 and H4. Methylation at Lys-5 (H3K4me) and Lys-80 (H3K79me) require preliminary monoubiquitination of H2B at 'Lys-120'. Post-translationally, phosphorylated at Thr-4 (H3T3ph) by VRK1. Phosphorylated at Thr-4 (H3T3ph) by HASPIN during prophase and dephosphorylated during anaphase. Phosphorylation at Ser-11 (H3S10ph) by aurkb is crucial for chromosome condensation and cell-cycle progression during mitosis and meiosis. In addition phosphorylation at Ser-11 (H3S10ph) by RPS6KA4 and RPS6KA5 is important during interphase because it enables the transcription of genes following external stimulation, like mitogens, stress, growth factors or UV irradiation and result in the activation of genes, such as c-fos and c-jun. Phosphorylation at Ser-11 (H3S10ph), which is linked to gene activation, prevents methylation at Lys-10 (H3K9me) but facilitates acetylation of H3 and H4. Phosphorylation at Ser-11 (H3S10ph) by aurkb mediates the dissociation of HP1 proteins (cbx1, cbx3 and cbx5) from heterochromatin. Phosphorylation at Ser-11 (H3S10ph) is also an essential regulatory mechanism for neoplastic cell transformation. Phosphorylated at Ser-29 (H3S28ph) by map3k20 isoform 1, rps6ka5 or aurkb during mitosis or upon ultraviolet B irradiation. Phosphorylation at Thr-7 (H3T6ph) by prkcb is a specific tag for epigenetic transcriptional activation that prevents demethylation of Lys-5 (H3K4me) by lsd1/kdm1a. At centromeres, specifically phosphorylated at Thr-12 (H3T11ph) from prophase to early anaphase, by DAPK3 and PKN1. Phosphorylation at Thr-12 (H3T11ph) by PKN1 or isoform M2 of PKM (PKM2) is a specific tag for epigenetic transcriptional activation that promotes demethylation of Lys-10 (H3K9me) by kdm4c/jmjd2c. Phosphorylation at Tyr-42 (H3Y41ph) by jak2 promotes exclusion of cbx5 (HP1 alpha) from chromatin. Phosphorylation on Ser-32 (H3S31ph) is specific to regions bordering centromeres in metaphase chromosomes. In terms of processing, monoubiquitinated by rag1 in lymphoid cells, monoubiquitination is required for V(D)J recombination. Lysine deamination at Lys-5 (H3K4all) to form allysine only takes place on H3K4me3 and results in gene repression. Post-translationally, butyrylation of histones marks active promoters and competes with histone acetylation. It is present during late spermatogenesis. In terms of processing, succinylation at Lys-80 (H3K79succ) by KAT2A takes place with a maximum frequency around the transcription start sites of genes. It gives a specific tag for epigenetic transcription activation. Desuccinylation at Lys-123 (H3K122succ) by SIRT7 in response to DNA damage promotes chromatin condensation and double-strand breaks (DSBs) repair. Serine ADP-ribosylation constitutes the primary form of ADP-ribosylation of proteins in response to DNA damage. Serine ADP-ribosylation at Ser-11 (H3S10ADPr) is mutually exclusive with phosphorylation at Ser-11 (H3S10ph) and impairs acetylation at Lys-10 (H3K9ac). Post-translationally, serotonylated by TGM2 at Gln-6 (H3Q5ser) during serotonergic neuron differentiation. H3Q5ser is associated with trimethylation of Lys-5 (H3K4me3) and enhances general transcription factor IID (TFIID) complex-binding to H3K4me3, thereby facilitating transcription. In terms of processing, dopaminylated by TGM2 at Gln-6 (H3Q5dop) in ventral tegmental area (VTA) neurons. H3Q5dop mediates neurotransmission-independent role of nuclear dopamine by regulating relapse-related transcriptional plasticity in the reward system. Lactylated in macrophages by EP300/P300 by using lactoyl-CoA directly derived from endogenous or exogenous lactate, leading to stimulates gene transcription.

The protein resides in the nucleus. It is found in the chromosome. Its function is as follows. Variant histone H3 which replaces conventional H3 in a wide range of nucleosomes in active genes. Constitutes the predominant form of histone H3 in non-dividing cells and is incorporated into chromatin independently of DNA synthesis. Deposited at sites of nucleosomal displacement throughout transcribed genes, suggesting that it represents an epigenetic imprint of transcriptionally active chromatin. Nucleosomes wrap and compact DNA into chromatin, limiting DNA accessibility to the cellular machineries which require DNA as a template. Histones thereby play a central role in transcription regulation, DNA repair, DNA replication and chromosomal stability. DNA accessibility is regulated via a complex set of post-translational modifications of histones, also called histone code, and nucleosome remodeling. This chain is Histone H3.3 (h3f3a), found in Danio rerio (Zebrafish).